Reading from the N-terminus, the 276-residue chain is TCP pilus virulence regulatory protein (276 aa).

The 98-residue stretch at 172–269 (EKISCLVKSD…NVAPSEYLFM (98 aa)) folds into the HTH araC/xylS-type domain. DNA-binding regions (H-T-H motif) lie at residues 189 to 210 (ADICGELRTNRMILKKELESRG) and 236 to 259 (IKQIAYQSGFASVSYFSTVFKSTM).

It is found in the cytoplasm. Functionally, probable regulatory protein for the tcp operon. In Vibrio cholerae serotype O1 (strain ATCC 39541 / Classical Ogawa 395 / O395), this protein is TCP pilus virulence regulatory protein (tcpN).